The primary structure comprises 367 residues: D-alanine--D-alanine ligase (367 aa).

The 206-residue stretch at 141–346 (KNLFAQAGLR…YPELIERLIA (206 aa)) folds into the ATP-grasp domain. Position 174 to 229 (174 to 229 (ERELGYPCFVKPANAGSSVGISKCKQRGDLKAAFIEAFQYDRKIIIEEAIVGREIE)) interacts with ATP. The Mg(2+) site is built by Asp300, Glu313, and Asn315.

It belongs to the D-alanine--D-alanine ligase family. The cofactor is Mg(2+). Requires Mn(2+) as cofactor.

It is found in the cytoplasm. The catalysed reaction is 2 D-alanine + ATP = D-alanyl-D-alanine + ADP + phosphate + H(+). The protein operates within cell wall biogenesis; peptidoglycan biosynthesis. Functionally, cell wall formation. The chain is D-alanine--D-alanine ligase from Geobacillus kaustophilus (strain HTA426).